Reading from the N-terminus, the 278-residue chain is 4-hydroxy-tetrahydrodipicolinate reductase (278 aa).

Residues 13–18 (GAAGKM) and 111–113 (GTT) contribute to the NAD(+) site. The active-site Proton donor/acceptor is the histidine 167. Histidine 168 is a binding site for (S)-2,3,4,5-tetrahydrodipicolinate. Residue lysine 171 is the Proton donor of the active site. 177–178 (GT) is a (S)-2,3,4,5-tetrahydrodipicolinate binding site.

Belongs to the DapB family.

It is found in the cytoplasm. The enzyme catalyses (S)-2,3,4,5-tetrahydrodipicolinate + NAD(+) + H2O = (2S,4S)-4-hydroxy-2,3,4,5-tetrahydrodipicolinate + NADH + H(+). It carries out the reaction (S)-2,3,4,5-tetrahydrodipicolinate + NADP(+) + H2O = (2S,4S)-4-hydroxy-2,3,4,5-tetrahydrodipicolinate + NADPH + H(+). Its pathway is amino-acid biosynthesis; L-lysine biosynthesis via DAP pathway; (S)-tetrahydrodipicolinate from L-aspartate: step 4/4. Its function is as follows. Catalyzes the conversion of 4-hydroxy-tetrahydrodipicolinate (HTPA) to tetrahydrodipicolinate. This chain is 4-hydroxy-tetrahydrodipicolinate reductase, found in Trichormus variabilis (strain ATCC 29413 / PCC 7937) (Anabaena variabilis).